A 114-amino-acid polypeptide reads, in one-letter code: uncharacterized protein (114 aa).

Residues 2–97 form the HTH arsR-type domain; that stretch reads ESEPLYKLKA…VARKVLARVL (96 aa). The H-T-H motif DNA-binding region spans 37-60; that stretch reads GELLSSDVGLESSNLSQQLGVLRR.

This is an uncharacterized protein from Mycobacterium tuberculosis (strain CDC 1551 / Oshkosh).